We begin with the raw amino-acid sequence, 594 residues long: Protein FAM200C (594 aa).

The polypeptide is Protein FAM200C (Homo sapiens (Human)).